Reading from the N-terminus, the 125-residue chain is Probable 4-amino-4-deoxy-L-arabinose-phosphoundecaprenol flippase subunit ArnF (125 aa).

The Cytoplasmic segment spans residues 1–2 (MG). Residues 3 to 23 (VMWGLISVAIASLAQLSLGFA) traverse the membrane as a helical segment. Residues 24-33 (MMRLPSIAHP) are Periplasmic-facing. A helical transmembrane segment spans residues 34–54 (LAFISGLGAFNAATLALFAGL). The Cytoplasmic portion of the chain corresponds to 55 to 76 (AGYLVSVFCWQKTLHMLALSKA). The chain crosses the membrane as a helical span at residues 77-97 (YALLSLSYVLVWVASMLLPGL). Residues 98–100 (QGA) lie on the Periplasmic side of the membrane. Residues 101-121 (FSLKAMLGVLCIMAGVMLIFL) traverse the membrane as a helical segment. Topologically, residues 122-125 (PARS) are cytoplasmic.

It belongs to the ArnF family. As to quaternary structure, heterodimer of ArnE and ArnF.

It is found in the cell inner membrane. It functions in the pathway bacterial outer membrane biogenesis; lipopolysaccharide biosynthesis. Translocates 4-amino-4-deoxy-L-arabinose-phosphoundecaprenol (alpha-L-Ara4N-phosphoundecaprenol) from the cytoplasmic to the periplasmic side of the inner membrane. The sequence is that of Probable 4-amino-4-deoxy-L-arabinose-phosphoundecaprenol flippase subunit ArnF from Salmonella paratyphi A (strain ATCC 9150 / SARB42).